Consider the following 554-residue polypeptide: Glucose-6-phosphate isomerase (554 aa).

Glutamate 359 serves as the catalytic Proton donor. Residues histidine 390 and lysine 518 contribute to the active site.

The protein belongs to the GPI family.

The protein resides in the cytoplasm. It catalyses the reaction alpha-D-glucose 6-phosphate = beta-D-fructose 6-phosphate. It participates in carbohydrate biosynthesis; gluconeogenesis. It functions in the pathway carbohydrate degradation; glycolysis; D-glyceraldehyde 3-phosphate and glycerone phosphate from D-glucose: step 2/4. In terms of biological role, catalyzes the reversible isomerization of glucose-6-phosphate to fructose-6-phosphate. The protein is Glucose-6-phosphate isomerase of Pseudomonas aeruginosa (strain LESB58).